The sequence spans 471 residues: 3-isopropylmalate dehydratase large subunit (471 aa).

C347, C407, and C410 together coordinate [4Fe-4S] cluster.

The protein belongs to the aconitase/IPM isomerase family. LeuC type 1 subfamily. In terms of assembly, heterodimer of LeuC and LeuD. [4Fe-4S] cluster is required as a cofactor.

The catalysed reaction is (2R,3S)-3-isopropylmalate = (2S)-2-isopropylmalate. It participates in amino-acid biosynthesis; L-leucine biosynthesis; L-leucine from 3-methyl-2-oxobutanoate: step 2/4. In terms of biological role, catalyzes the isomerization between 2-isopropylmalate and 3-isopropylmalate, via the formation of 2-isopropylmaleate. The protein is 3-isopropylmalate dehydratase large subunit of Anoxybacillus flavithermus (strain DSM 21510 / WK1).